A 325-amino-acid polypeptide reads, in one-letter code: Aldo-keto reductase family 1 member A1 (325 aa).

The residue at position 2 (T2) is an N-acetylthreonine. S4 bears the Phosphoserine mark. NADP(+) contacts are provided by residues 11-20, T21, and W22; that span reads GQKMPLIGLG. Phosphoserine is present on S38. Residue D45 coordinates NADP(+). Y50 (proton donor) is an active-site residue. An N6-acetyllysine; alternate modification is found at K127. K127 bears the N6-succinyllysine; alternate mark. N6-succinyllysine is present on K145. Positions 162, 163, 211, 213, 215, 216, 263, 264, 265, 269, 272, and 273 each coordinate NADP(+). S211 is modified (phosphoserine).

The protein belongs to the aldo/keto reductase family. In terms of assembly, monomer. Widely expressed.

It localises to the cytoplasm. It is found in the cytosol. Its subcellular location is the apical cell membrane. The enzyme catalyses a primary alcohol + NADP(+) = an aldehyde + NADPH + H(+). It carries out the reaction L-gulonate + NADP(+) = aldehydo-D-glucuronate + NADPH + H(+). It catalyses the reaction L-gulono-1,4-lactone + NADP(+) = D-glucurono-3,6-lactone + NADPH + H(+). The catalysed reaction is allyl alcohol + NADP(+) = acrolein + NADPH + H(+). The enzyme catalyses glycerol + NADP(+) = D-glyceraldehyde + NADPH + H(+). It carries out the reaction glycerol + NADP(+) = L-glyceraldehyde + NADPH + H(+). It catalyses the reaction hydroxyacetone + NADP(+) = methylglyoxal + NADPH + H(+). The catalysed reaction is 3-deoxyfructose + NADP(+) = 3-deoxyglucosone + NADPH + H(+). The enzyme catalyses (R)-mevalonate + NADP(+) = (R)-mevaldate + NADPH + H(+). It carries out the reaction pyridine 3-methanol + NADP(+) = pyridine-3-carbaldehyde + NADPH + H(+). It catalyses the reaction S-nitroso-CoA + NADPH + H(+) = sulfinamide-CoA + NADP(+). The catalysed reaction is S-nitrosoglutathione + NADPH + H(+) = S-(hydroxysulfenamide)glutathione + NADP(+). Functionally, catalyzes the NADPH-dependent reduction of a wide variety of carbonyl-containing compounds to their corresponding alcohols. Displays enzymatic activity towards endogenous metabolites such as aromatic and aliphatic aldehydes, ketones, monosaccharides and bile acids, with a preference for negatively charged substrates, such as glucuronate and succinic semialdehyde. Plays an important role in ascorbic acid biosynthesis by catalyzing the reduction of D-glucuronic acid and D-glucurono-gamma-lactone. Functions as a detoxifiying enzyme by reducing a range of toxic aldehydes. Reduces methylglyoxal and 3-deoxyglucosone, which are present at elevated levels under hyperglycemic conditions and are cytotoxic. Involved in the detoxification of lipid-derived aldehydes like acrolein. Plays a role in the activation of procarcinogens, such as polycyclic aromatic hydrocarbon trans-dihydrodiols, and in the metabolism of various xenobiotics and drugs. Also acts as an inhibitor of protein S-nitrosylation by mediating degradation of S-nitroso-coenzyme A (S-nitroso-CoA), a cofactor required to S-nitrosylate proteins. S-nitroso-CoA reductase activity is involved in reprogramming intermediary metabolism in renal proximal tubules, notably by inhibiting protein S-nitrosylation of isoform 2 of PKM (PKM2). Also acts as a S-nitroso-glutathione reductase by catalyzing the NADPH-dependent reduction of S-nitrosoglutathione. Displays no reductase activity towards retinoids. The chain is Aldo-keto reductase family 1 member A1 from Mus musculus (Mouse).